A 503-amino-acid chain; its full sequence is Podocalyxin (503 aa).

A signal peptide spans 1 to 21 (MPPTTALSALLLLLLSPASHS). The segment at 19 to 236 (SHSHNGNETS…PLTSQTPGIT (218 aa)) is disordered. Residues 20 to 50 (HSHNGNETSTSAIKSSTVQSHQSATTSTEVT) are compositionally biased toward polar residues. Topologically, residues 22 to 404 (HNGNETSTSA…PPEVNEDRFS (383 aa)) are extracellular. N-linked (GlcNAc...) asparagine glycans are attached at residues Asn25, Asn89, and Asn94. A compositionally biased stretch (low complexity) spans 61–91 (STQPSNPTPFTTSTQSPSMPTSTPNPTSNQS). Positions 107-126 (TSSPSSTAFTSSSGQTASSG) are enriched in low complexity. Over residues 131–183 (DSFTTAPTTTLGLINVSSQPTDLNTTSKLLSTPTTDNTTSPQQPVDSSPSTAS) the composition is skewed to polar residues. Asn145, Asn154, Asn167, and Asn206 each carry an N-linked (GlcNAc...) asparagine glycan. Positions 196 to 208 (SSSGSTPSTDNST) are enriched in low complexity. Residues 222 to 236 (SEATQPLTSQTPGIT) are compositionally biased toward polar residues. An N-linked (GlcNAc...) asparagine glycan is attached at Asn303. The chain crosses the membrane as a helical span at residues 405-425 (LPLIITIVCMASFLLLVAALY). The Cytoplasmic segment spans residues 426–503 (GCCHQRISQR…DLDEEEDTHL (78 aa)). Thr463 is subject to Phosphothreonine. Ser482 carries the phosphoserine modification. The residue at position 501 (Thr501) is a Phosphothreonine.

Belongs to the podocalyxin family. As to quaternary structure, monomer; when associated with the membrane raft. Oligomer; when integrated in the apical membrane. Found in a complex with EZR, PODXL and NHERF2. Associates with the actin cytoskeleton through complex formation with EZR and NHERF2. Interacts (via the C-terminal PDZ-binding motif DTHL) with NHERF1 (via the PDZ domains); interaction is not detected in glomerular epithelium cells, take place early in the secretory pathway and is necessary for its apical membrane sorting. Interacts (via the C-terminal PDZ-binding motif DTHL) with NHERF2 (via the PDZ 1 domain); interaction is detected in glomerular epithelium cells. Interacts with EZR. N- and O-linked glycosylated. Sialoglycoprotein. As to expression, expressed in liver cells and hematopoietic cells (at protein level). Glomerular epithelium cell (podocyte).

The protein resides in the apical cell membrane. The protein localises to the cell projection. Its subcellular location is the microvillus. It is found in the membrane raft. It localises to the lamellipodium. The protein resides in the filopodium. The protein localises to the ruffle. Its subcellular location is the membrane. Involved in the regulation of both adhesion and cell morphology and cancer progression. Functions as an anti-adhesive molecule that maintains an open filtration pathway between neighboring foot processes in the podocyte by charge repulsion. Acts as a pro-adhesive molecule, enhancing the adherence of cells to immobilized ligands, increasing the rate of migration and cell-cell contacts in an integrin-dependent manner. Induces the formation of apical actin-dependent microvilli. Involved in the formation of a preapical plasma membrane subdomain to set up initial epithelial polarization and the apical lumen formation during renal tubulogenesis. Plays a role in cancer development and aggressiveness by inducing cell migration and invasion through its interaction with the actin-binding protein EZR. Affects EZR-dependent signaling events, leading to increased activities of the MAPK and PI3K pathways in cancer cells. The protein is Podocalyxin (Podxl) of Mus musculus (Mouse).